The chain runs to 242 residues: Placenta-expressed transcript 1 protein (242 aa).

The signal sequence occupies residues 1–26 (MAVLRSLLPQLGLFLCLALCFSPALS). Asparagine 47, asparagine 56, and asparagine 66 each carry an N-linked (GlcNAc...) asparagine glycan. The GPI-anchor amidated serine moiety is linked to residue serine 223. Positions 224 to 242 (PLAGALHILLVFLISKLLF) are cleaved as a propeptide — removed in mature form.

N-glycosylated. Post-translationally, GPI-anchored. As to expression, present at high level in the dermal sheath cells near the bulge area of the hair follicle and in the differentiated sebocytes of the normal adult skin (at protein level).

The protein localises to the apical cell membrane. In terms of biological role, modulates leading keratinocyte migration and cellular adhesion to matrix proteins during a wound-healing response and promotes wound repair. May play a role during trichilemmal differentiation of the hair follicle. The chain is Placenta-expressed transcript 1 protein (PLET1) from Mesocricetus auratus (Golden hamster).